A 427-amino-acid polypeptide reads, in one-letter code: Septin-8 (427 aa).

Positions 39–305 constitute a Septin-type G domain; the sequence is QGFCFNILCV…ELYRRCKLEE (267 aa). The segment at 49–56 is G1 motif; the sequence is GETGIGKS. GTP contacts are provided by residues 49-56, Gly104, 185-193, Gly239, and Arg254; these read GETGIGKS and KADTISKSE. The segment at 101–104 is G3 motif; sequence DTVG. The segment at 184–187 is G4 motif; the sequence is AKAD. Residues 321–409 are a coiled coil; sequence QETYEAKRKE…KAAMEALQSQ (89 aa). The segment at 373 to 427 is disordered; it reads RVHQEESKKVEDKRRDLEEEMNSFNRRKAAMEALQSQSFQATSQQPLKKDKDRKN. A compositionally biased stretch (basic and acidic residues) spans 374–389; it reads VHQEESKKVEDKRRDL. Over residues 406-418 the composition is skewed to polar residues; sequence LQSQSFQATSQQP.

Belongs to the TRAFAC class TrmE-Era-EngA-EngB-Septin-like GTPase superfamily. Septin GTPase family.

It is found in the cytoplasm. The protein localises to the cytoskeleton. It localises to the synapse. The protein resides in the cell projection. Its subcellular location is the axon. It is found in the cytoplasmic vesicle. The protein localises to the secretory vesicle. It localises to the synaptic vesicle membrane. The protein resides in the presynapse. This is Septin-8 from Xenopus tropicalis (Western clawed frog).